We begin with the raw amino-acid sequence, 299 residues long: ATP phosphoribosyltransferase (299 aa).

Belongs to the ATP phosphoribosyltransferase family. Long subfamily. Equilibrium between an active dimeric form, an inactive hexameric form and higher aggregates. Interconversion between the various forms is largely reversible and is influenced by the natural substrates and inhibitors of the enzyme. It depends on Mg(2+) as a cofactor.

The protein resides in the cytoplasm. It catalyses the reaction 1-(5-phospho-beta-D-ribosyl)-ATP + diphosphate = 5-phospho-alpha-D-ribose 1-diphosphate + ATP. It functions in the pathway amino-acid biosynthesis; L-histidine biosynthesis; L-histidine from 5-phospho-alpha-D-ribose 1-diphosphate: step 1/9. With respect to regulation, feedback inhibited by histidine. In terms of biological role, catalyzes the condensation of ATP and 5-phosphoribose 1-diphosphate to form N'-(5'-phosphoribosyl)-ATP (PR-ATP). Has a crucial role in the pathway because the rate of histidine biosynthesis seems to be controlled primarily by regulation of HisG enzymatic activity. The sequence is that of ATP phosphoribosyltransferase from Escherichia coli O81 (strain ED1a).